A 67-amino-acid chain; its full sequence is Colostrum trypsin inhibitor (67 aa).

Residues 8–58 form the BPTI/Kunitz inhibitor domain; it reads CQLPQARGPCKAALLRYFYNSTSNACEPFTYGGCQGNNBNFETTEMCLRIC. 3 cysteine pairs are disulfide-bonded: cysteine 8-cysteine 58, cysteine 17-cysteine 41, and cysteine 33-cysteine 54. Asparagine 27 carries an N-linked (GlcNAc...) asparagine glycan.

Its subcellular location is the secreted. In Bos taurus (Bovine), this protein is Colostrum trypsin inhibitor.